A 383-amino-acid polypeptide reads, in one-letter code: Protein delta homolog 2 (383 aa).

Positions 1–26 (MPSGCRCLHLVCLLCILAAPVKPVRA) are cleaved as a signal peptide. EGF-like domains are found at residues 27–58 (DDCSSHCDLAHGCCAPDGSCRCDPGWEGLHCE), 62–89 (RMPGCQHGTCHQPWQCICHSGWAGKFCD), 91–129 (DEHVCTTQSPCRNGGQCIYDGGGEYHCVCPPGFHGRDCE), and 131–172 (KEGP…AHCE). Residues 27–306 (DDCSSHCDLA…RQEAGLGKSS (280 aa)) lie on the Extracellular side of the membrane. 17 disulfide bridges follow: Cys29–Cys40, Cys33–Cys46, Cys48–Cys57, Cys66–Cys71, Cys79–Cys88, Cys95–Cys107, Cys101–Cys117, Cys119–Cys128, Cys135–Cys148, Cys142–Cys160, Cys162–Cys171, Cys178–Cys189, Cys183–Cys198, Cys200–Cys209, Cys216–Cys227, Cys221–Cys236, and Cys238–Cys247. N-linked (GlcNAc...) asparagine glycosylation occurs at Asn157. Positions 174–210 (NVDDCLMRPCANGATCLDGINRFSCLCPEGFAGRFCT) constitute an EGF-like 5; calcium-binding domain. Positions 212 to 248 (NLDDCASRPCQRGARCRDRVHDFDCLCPSGYGGKTCE) constitute an EGF-like 6; calcium-binding domain. Residues 307-327 (LVAVVVFGAVTATLVLSTVLL) traverse the membrane as a helical segment. The Cytoplasmic segment spans residues 328 to 383 (TLRAWRRGVCPPGPCCYPAPHYAPARQDQECQVSMLPAGLPLPPDLPPEPGKTTAL).

Its subcellular location is the membrane. Regulates adipogenesis. The protein is Protein delta homolog 2 (DLK2) of Sus scrofa (Pig).